The following is a 299-amino-acid chain: tRNA dimethylallyltransferase (299 aa).

10-17 (GPTAVGKT) contributes to the ATP binding site. 12-17 (TAVGKT) contacts substrate. Positions 35 to 38 (DSQQ) are interaction with substrate tRNA.

It belongs to the IPP transferase family. Monomer. It depends on Mg(2+) as a cofactor.

The catalysed reaction is adenosine(37) in tRNA + dimethylallyl diphosphate = N(6)-dimethylallyladenosine(37) in tRNA + diphosphate. Catalyzes the transfer of a dimethylallyl group onto the adenine at position 37 in tRNAs that read codons beginning with uridine, leading to the formation of N6-(dimethylallyl)adenosine (i(6)A). This chain is tRNA dimethylallyltransferase, found in Streptococcus thermophilus (strain ATCC BAA-250 / LMG 18311).